A 210-amino-acid chain; its full sequence is BAG family molecular chaperone regulator 1 (210 aa).

The Ubiquitin-like domain maps to 8-85 (SSVQTTIDIL…IIVMGGKNAL (78 aa)). Residues 108 to 194 (AYDLNLRDVA…TLLNQNDALL (87 aa)) form the BAG domain.

Homodimer or homotetramer.

In terms of biological role, may inhibit the chaperone activity of HSP70/HSC70 by promoting substrate release in an ATP-dependent manner. The protein is BAG family molecular chaperone regulator 1 (bag-1) of Caenorhabditis elegans.